The sequence spans 629 residues: MQLVQLANFVLDNLVQSRIGFIVLFHCWQSDESLKFAQQFMKPIHPILVYHQFVQMRGVLNWSHLELSYMGHTQPTLAIYVDIKCDQTQDLLEEASREQIYNQHYHWLLVGNQSKLEFYDLFGLFNISIDADVSYVKEQIQDNNDSVAYAVHDVYNNGKIIGGQLNVTGSHEMSCDPFVCRRTRHLSSLQKRSKYGNREQLTDVVLRVATVVTQRPLTLSDDELIRFLSQENDTHIDSLARFGFHLTLILRDLLHCKMKFIFSDSWSKSDVVGGSVGAVVDQTADLTATPSLATEGRLKYLSAIIETGFFRSVCIFRTPHNAGLRGDVFLQPFSPLVWYLFGGVLSLIGVLLWITFYMECKRMQKRWRLDYLPSLLSTFLISFGAACIQSSSLIPRSAGGRLIYFALFLISFIMYNYYTSVVVSSLLSSPVKSKIKTMRQLAESSLTVGLEPLPFTKSYLNYSRLPEIHLFIKRKIESQTQNPELWLPAEQGVLRVRDNPGYVYVFETSSGYAYVERYFTAQEICDLNEVLFRPEQLFYTHLHRNSTYKELFRLRFLRILETGVYRKQRSYWVHMKLHCVAQNFVITVGMEYVAPLLLMLICADILVVVILLVELAWKRFFTRHLTFHP.

Residues 1–335 lie on the Extracellular side of the membrane; it reads MQLVQLANFV…GDVFLQPFSP (335 aa). N-linked (GlcNAc...) asparagine glycans are attached at residues N61, N112, N126, N144, N166, and N232. The helical transmembrane segment at 336-356 threads the bilayer; the sequence is LVWYLFGGVLSLIGVLLWITF. Topologically, residues 357-374 are cytoplasmic; it reads YMECKRMQKRWRLDYLPS. A helical transmembrane segment spans residues 375-395; that stretch reads LLSTFLISFGAACIQSSSLIP. Topologically, residues 396 to 402 are extracellular; it reads RSAGGRL. Residues 403-423 traverse the membrane as a helical segment; that stretch reads IYFALFLISFIMYNYYTSVVV. The Cytoplasmic segment spans residues 424–592; the sequence is SSLLSSPVKS…NFVITVGMEY (169 aa). A helical transmembrane segment spans residues 593-613; sequence VAPLLLMLICADILVVVILLV. Topologically, residues 614-629 are extracellular; sequence ELAWKRFFTRHLTFHP.

Belongs to the glutamate-gated ion channel (TC 1.A.10.1) family. As to expression, expressed in acetic-acid-sensing neurons in the antennal coeloconic 2 (ac2) and antennal coeloconic 3 (ac3) sensilla class of sensory hairs (at protein level).

The protein resides in the cell membrane. It localises to the cell projection. Its subcellular location is the dendrite. Its function is as follows. Odorant receptor for acetic and propionic acid. Functions as part of an olfactory receptor complex including the ionotropic receptor coreceptor Ir8a. This chain is Ionotropic receptor 75a, found in Drosophila melanogaster (Fruit fly).